A 632-amino-acid chain; its full sequence is Extracellular metalloproteinase 5 (632 aa).

The first 20 residues, 1-20 (MHGLLLAAGLLSLPLHVLAH), serve as a signal peptide directing secretion. Positions 21–244 (PQPGTSLAGR…HNVVDYVSHA (224 aa)) are excised as a propeptide. N284 carries an N-linked (GlcNAc...) asparagine glycan. H427 is a Zn(2+) binding site. Residue E428 is part of the active site. H431 is a binding site for Zn(2+). 2 N-linked (GlcNAc...) asparagine glycosylation sites follow: N591 and N620.

This sequence belongs to the peptidase M36 family. It depends on Zn(2+) as a cofactor.

The protein localises to the secreted. In terms of biological role, secreted metalloproteinase probably acting as a virulence factor. The sequence is that of Extracellular metalloproteinase 5 (MEP5) from Arthroderma otae (strain ATCC MYA-4605 / CBS 113480) (Microsporum canis).